The following is a 603-amino-acid chain: Chaperone protein DnaK (603 aa).

Threonine 175 carries the phosphothreonine; by autocatalysis modification. Positions 573 to 586 (AQQAQQQNPDNQNN) are enriched in low complexity. The tract at residues 573-603 (AQQAQQQNPDNQNNNKDDVTEATVTDDSTKK) is disordered. The span at 594–603 (ATVTDDSTKK) shows a compositional bias: polar residues.

The protein belongs to the heat shock protein 70 family.

Acts as a chaperone. The protein is Chaperone protein DnaK of Ureaplasma parvum serovar 3 (strain ATCC 27815 / 27 / NCTC 11736).